The following is a 463-amino-acid chain: Putative dipeptidase YtjP (463 aa).

His85 contributes to the Zn(2+) binding site. The active site involves Asp87. Asp116 lines the Zn(2+) pocket. Residue Glu150 is the Proton acceptor of the active site. Zn(2+) is bound by residues Glu151, Asp174, and His436.

Belongs to the peptidase M20A family. The cofactor is Zn(2+).

The polypeptide is Putative dipeptidase YtjP (ytjP) (Bacillus subtilis (strain 168)).